Here is a 606-residue protein sequence, read N- to C-terminus: WD repeat-containing protein 1 (606 aa).

WD repeat units lie at residues glutamate 4–isoleucine 45, proline 48–threonine 87, leucine 93–threonine 135, serine 138–glycine 176, lysine 180–glycine 218, valine 224–valine 263, serine 270–lysine 306, lysine 311–serine 351, serine 358–valine 408, leucine 432–isoleucine 474, lysine 480–valine 518, serine 523–leucine 561, and threonine 566–isoleucine 604. 4 positions are modified to N6-acetyllysine: lysine 28, lysine 81, lysine 95, and lysine 115. The residue at position 238 (tyrosine 238) is a Phosphotyrosine. The residue at position 480 (lysine 480) is an N6-acetyllysine.

This sequence belongs to the WD repeat AIP1 family.

The protein localises to the cytoplasm. It localises to the cytoskeleton. Its subcellular location is the cell projection. The protein resides in the podosome. Functionally, induces disassembly of actin filaments in conjunction with ADF/cofilin family proteins. Enhances cofilin-mediated actin severing. Involved in cytokinesis. Involved in chemotactic cell migration by restricting lamellipodial membrane protrusions. Involved in myocardium sarcomere organization. Required for cardiomyocyte growth at the postnatal and maintenance at the adult stage. Involved in neutrophil actin dynamics and migration. Involved in megakaryocyte maturation and platelet shedding. Required for the establishment of planar cell polarity (PCP) during follicular epithelium development and for cell shape changes during PCP; the function seems to implicate cooperation with CFL1 and/or DSTN/ADF. Involved in the generation/maintenance of cortical tension. Involved in assembly and maintenance of epithelial apical cell junctions and plays a role in the organization of the perijunctional actomyosin belt. The sequence is that of WD repeat-containing protein 1 (Wdr1) from Mus musculus (Mouse).